A 549-amino-acid polypeptide reads, in one-letter code: Glucose-6-phosphate isomerase (549 aa).

N6-acetyllysine occurs at positions 80, 228, and 234. Catalysis depends on Glu355, which acts as the Proton donor. Residues His386 and Lys514 contribute to the active site.

The protein belongs to the GPI family.

The protein resides in the cytoplasm. It catalyses the reaction alpha-D-glucose 6-phosphate = beta-D-fructose 6-phosphate. It functions in the pathway carbohydrate biosynthesis; gluconeogenesis. The protein operates within carbohydrate degradation; glycolysis; D-glyceraldehyde 3-phosphate and glycerone phosphate from D-glucose: step 2/4. Functionally, catalyzes the reversible isomerization of glucose-6-phosphate to fructose-6-phosphate. The polypeptide is Glucose-6-phosphate isomerase (Escherichia coli (strain SMS-3-5 / SECEC)).